The chain runs to 619 residues: Chaperone protein HscA homolog (619 aa).

Belongs to the heat shock protein 70 family.

Chaperone involved in the maturation of iron-sulfur cluster-containing proteins. Has a low intrinsic ATPase activity which is markedly stimulated by HscB. This chain is Chaperone protein HscA homolog, found in Pseudomonas aeruginosa (strain LESB58).